The chain runs to 162 residues: Cyclic pyranopterin monophosphate synthase (162 aa).

Residues 79-81 (LCH) and 117-118 (ME) contribute to the substrate site. Residue Asp132 is part of the active site.

Belongs to the MoaC family. As to quaternary structure, homohexamer; trimer of dimers.

The catalysed reaction is (8S)-3',8-cyclo-7,8-dihydroguanosine 5'-triphosphate = cyclic pyranopterin phosphate + diphosphate. Its pathway is cofactor biosynthesis; molybdopterin biosynthesis. Its function is as follows. Catalyzes the conversion of (8S)-3',8-cyclo-7,8-dihydroguanosine 5'-triphosphate to cyclic pyranopterin monophosphate (cPMP). The sequence is that of Cyclic pyranopterin monophosphate synthase from Bordetella avium (strain 197N).